The chain runs to 267 residues: Eukaryotic translation initiation factor 3 subunit J (267 aa).

2 disordered regions span residues 1-118 and 221-241; these read MAPS…DLKH and MREERAADKGNKKTKAAKTKV. Residues 28–46 are compositionally biased toward acidic residues; sequence DEEEEDVLDSWDAAEDSEV. Residues 44–99 are a coiled coil; that stretch reads SEVEREKAAKAAAAAAKAEAEAAAKKKSKAQRIEERKQERKKLAEANESDEDSEED. Basic and acidic residues predominate over residues 74–88; the sequence is QRIEERKQERKKLAE. Positions 90-100 are enriched in acidic residues; that stretch reads NESDEDSEEDE. 2 stretches are compositionally biased toward basic and acidic residues: residues 108 to 118 and 221 to 231; these read RRTEKEGDLKH and MREERAADKGN.

The protein belongs to the eIF-3 subunit J family. Component of the eukaryotic translation initiation factor 3 (eIF-3) complex.

The protein resides in the cytoplasm. Functionally, component of the eukaryotic translation initiation factor 3 (eIF-3) complex, which is involved in protein synthesis of a specialized repertoire of mRNAs and, together with other initiation factors, stimulates binding of mRNA and methionyl-tRNAi to the 40S ribosome. The eIF-3 complex specifically targets and initiates translation of a subset of mRNAs involved in cell proliferation. The protein is Eukaryotic translation initiation factor 3 subunit J (hcr1) of Aspergillus fumigatus (strain CBS 144.89 / FGSC A1163 / CEA10) (Neosartorya fumigata).